We begin with the raw amino-acid sequence, 278 residues long: MTARIDAAFARCRAEGRAALVTYVMAGDPDPETSLKVLEALPKAGADIVEFGLPFTDPMADGPAIQAAGLRALKAGQDLRGTLALVRRFREGDDRTPVVLMGYYNPIHTYGVPRFLEDAQAAGIDGLIVVDLPPEEDEELCLPAREKGLAFIRLATPTTDAARLPAVLANTAGFVYYVSITGVTGTATPDFGRVSQAVGRIAAQTDLPVVVGFGVRTGAHAAEIARGADGVVVGSALVDALARSLEPGDRAGSGTVEAVAALVRELSEGVRSTVKTGA.

Active-site proton acceptor residues include glutamate 50 and aspartate 61.

Belongs to the TrpA family. Tetramer of two alpha and two beta chains.

It carries out the reaction (1S,2R)-1-C-(indol-3-yl)glycerol 3-phosphate + L-serine = D-glyceraldehyde 3-phosphate + L-tryptophan + H2O. It participates in amino-acid biosynthesis; L-tryptophan biosynthesis; L-tryptophan from chorismate: step 5/5. Its function is as follows. The alpha subunit is responsible for the aldol cleavage of indoleglycerol phosphate to indole and glyceraldehyde 3-phosphate. This chain is Tryptophan synthase alpha chain, found in Methylorubrum populi (strain ATCC BAA-705 / NCIMB 13946 / BJ001) (Methylobacterium populi).